Here is a 316-residue protein sequence, read N- to C-terminus: Nautilin-63 (316 aa).

Disordered stretches follow at residues 1 to 26 (IPDL…GPRG), 149 to 173 (PFPT…VTPF), 189 to 238 (DSRC…GIAS), and 259 to 278 (PPTS…GLNK). The segment covering 10 to 26 (TLPVLTKGPTGLLGPRG) has biased composition (low complexity). Composition is skewed to polar residues over residues 152–163 (TSRSTYGPSGSQ), 207–216 (GHSSPATLNS), and 269–278 (SGYTSDGLNK).

Glycosylated; contains mainly glucose, galactose, galactosamine, glucosamine and glucuronic acid. In terms of tissue distribution, component of the acid-soluble organic matrix of nacreous shell layers (at protein level).

It localises to the secreted. Involved in nacre formation. Affects morphology of calcite crystals in vitro but does not inhibit their formation. Binds chitin. The polypeptide is Nautilin-63 (Nautilus macromphalus (Bellybutton nautilus)).